The primary structure comprises 351 residues: Beta-hexosaminidase (351 aa).

Residues aspartate 62, arginine 70, arginine 134, and lysine 164–histidine 165 contribute to the substrate site. Histidine 177 functions as the Proton donor/acceptor in the catalytic mechanism. Aspartate 249 (nucleophile) is an active-site residue.

The protein belongs to the glycosyl hydrolase 3 family. NagZ subfamily.

The protein localises to the cytoplasm. The catalysed reaction is Hydrolysis of terminal non-reducing N-acetyl-D-hexosamine residues in N-acetyl-beta-D-hexosaminides.. The protein operates within cell wall biogenesis; peptidoglycan recycling. Plays a role in peptidoglycan recycling by cleaving the terminal beta-1,4-linked N-acetylglucosamine (GlcNAc) from peptide-linked peptidoglycan fragments, giving rise to free GlcNAc, anhydro-N-acetylmuramic acid and anhydro-N-acetylmuramic acid-linked peptides. The protein is Beta-hexosaminidase of Histophilus somni (strain 129Pt) (Haemophilus somnus).